Consider the following 80-residue polypeptide: Bowman-Birk type proteinase inhibitor (80 aa).

7 disulfides stabilise this stretch: Cys19–Cys70, Cys20–Cys35, Cys23–Cys66, Cys25–Cys33, Cys41–Cys47, Cys44–Cys59, and Cys49–Cys57.

In terms of assembly, occurs as a monomer, dimer or trimer. The dimer may be the active form. Binds calcium, probably through His-3 to His-6.

Its function is as follows. Protease inhibitor with activity against cysteine, aspartic and serine proteases. Highest activity against serine proteases, in particular trypsin and trypsin-like proteases. This chain is Bowman-Birk type proteinase inhibitor, found in Phaseolus acutifolius (Tepary bean).